The sequence spans 622 residues: MSGSKAESEEKAGSKQCPLVQVNEYKENEHIAYTSLRPIQITTLRKTAKVYLYPFSLSNSKLGLLKLSKSPVVNNSSKSVVHKKKDRKKTRRKVLTSKMKALSSKADSLLLKSSVDAYTESTRLGPKRTSDSATLSVDAESSDEDSAPGLDDFSGLSPYERKRLRNIRENANFFASLQLAESAARLRGMIKKRESPESKRKRPKKKENEIGCRRSMRLLKVDPLGVSLPASPTQPTLVEEEENPLLPPGPLEMIPENQDDSSELLKASLKTWAEMSQTSNEKTKKGLSSIKSYKANLSGMVISEATVRKVTKGAISSVALHPSEVRTLVAAGAKSGQIGLWDLTQQSEDAMYVFYAHSRYVSCLSFSPTNPAHLLSLSYDGTLRCGDFSSAVFEEVYRNEGNSPSSFDFLNDSSSLLVGHWDGHLSLVDRRTPGTSYEKFFNSSLEKIRTVHVHPLSRQYFVTAGLRDVHVYDARFLKSRGSQPLISLTEHSKSIASAYFSPVTGNRVVTTCADCKLRVFDSSSISSQLPLLSTIRHNTVTGRWLTRFQAVWDPKQEDCFIVGSMDHPRRVEVFHESGKNVHSLWGECLVSVCSLSAVHPTRYILAGGNSSGKLHVFMHQET.

Disordered stretches follow at residues 75–94 (NSSK…RRKV), 120–155 (ESTR…DFSG), and 189–209 (MIKK…KENE). The segment covering 80-94 (VVHKKKDRKKTRRKV) has biased composition (basic residues). 7 WD repeats span residues 310–351 (VTKG…EDAM), 356–398 (AHSR…EVYR), 400–438 (EGNS…TSYE), 443–482 (SSLE…SRGS), 490–530 (EHSK…SQLP), 540–584 (VTGR…VHSL), and 587–622 (ECLV…HQET).

It belongs to the WD repeat DDB2/WDR76 family. In terms of assembly, interacts with CUL4A and/or CUL4B.

In terms of biological role, specifically binds 5-hydroxymethylcytosine (5hmC), suggesting that it acts as a specific reader of 5hmC. This Mus musculus (Mouse) protein is WD repeat-containing protein 76 (Wdr76).